The sequence spans 1019 residues: Photoactivated adenylate cyclase subunit alpha-like protein FB (1019 aa).

Positions 55–148 (LRRLMYLSAS…GRLYGEWHMK (94 aa)) constitute a BLUF 1 domain. The region spanning 204–332 (VVTFIYLVEF…DCINTASRIT (129 aa)) is the Guanylate cyclase 1 domain. The BLUF 2 domain maps to 467–559 (LITLTYISQA…REYGSPLDMT (93 aa)). In terms of domain architecture, Guanylate cyclase 2 spans 615 to 744 (VLLATDICSF…EVSARVMEVV (130 aa)). Residues 825–839 (APGRGAPAGGIPSSP) show a composition bias toward low complexity. The disordered stretch occupies residues 825 to 862 (APGRGAPAGGIPSSPKVRPPGRTNSVSSYTPDPNEALD). A compositionally biased stretch (polar residues) spans 846–855 (RTNSVSSYTP).

This sequence belongs to the adenylyl cyclase class-4/guanylyl cyclase family. Heterotetramer of two alpha and two beta subunits.

The protein resides in the cell projection. It is found in the cilium. The protein localises to the flagellum. This is Photoactivated adenylate cyclase subunit alpha-like protein FB from Euglena gracilis.